A 530-amino-acid polypeptide reads, in one-letter code: N-acetylmuramoyl-L-alanine amidase (530 aa).

Positions 1–22 are cleaved as a signal peptide; the sequence is MKAWGALWIVLGLLLWPEPGAA. 3 N-linked (GlcNAc...) asparagine glycosylation sites follow: N61, N80, and N174. S219 carries the phosphoserine modification. Residue N335 is glycosylated (N-linked (GlcNAc...) asparagine). The N-acetylmuramoyl-L-alanine amidase domain maps to 386–512; the sequence is FLYVHHTYVP…RQLVLTHCPG (127 aa). H390 is a Zn(2+) binding site. C399 and C405 form a disulfide bridge. N-linked (GlcNAc...) asparagine glycosylation occurs at N465. H502 and C510 together coordinate Zn(2+).

The protein belongs to the N-acetylmuramoyl-L-alanine amidase 2 family. The cofactor is Zn(2+). In terms of tissue distribution, strongly expressed in liver and fetal liver.

It is found in the secreted. Its subcellular location is the membrane. It carries out the reaction Hydrolyzes the link between N-acetylmuramoyl residues and L-amino acid residues in certain cell-wall glycopeptides.. May play a scavenger role by digesting biologically active peptidoglycan (PGN) into biologically inactive fragments. Has no direct bacteriolytic activity. This chain is N-acetylmuramoyl-L-alanine amidase (Pglyrp2), found in Mus musculus (Mouse).